The following is a 139-amino-acid chain: D-ribose pyranase (139 aa).

The active-site Proton donor is the histidine 20. Substrate-binding positions include aspartate 28, histidine 106, and 128–130 (YAN).

It belongs to the RbsD / FucU family. RbsD subfamily. As to quaternary structure, homodecamer.

It localises to the cytoplasm. It carries out the reaction beta-D-ribopyranose = beta-D-ribofuranose. It functions in the pathway carbohydrate metabolism; D-ribose degradation; D-ribose 5-phosphate from beta-D-ribopyranose: step 1/2. In terms of biological role, catalyzes the interconversion of beta-pyran and beta-furan forms of D-ribose. The sequence is that of D-ribose pyranase from Photobacterium profundum (strain SS9).